A 536-amino-acid chain; its full sequence is CTP synthase (536 aa).

The interval 1–267 (MSKFVFVTGG…CKETLKYLEL (267 aa)) is amidoligase domain. Residue Ser13 coordinates CTP. Ser13 provides a ligand contact to UTP. ATP is bound by residues 14 to 19 (SIGKGI) and Asp71. Positions 71 and 141 each coordinate Mg(2+). CTP contacts are provided by residues 148–150 (DIE), 188–193 (KTKPTQ), and Lys224. UTP-binding positions include 188-193 (KTKPTQ) and Lys224. A Glutamine amidotransferase type-1 domain is found at 292-534 (KVALVGKYIE…IKSSQENLTQ (243 aa)). Residue Gly354 participates in L-glutamine binding. Cys381 acts as the Nucleophile; for glutamine hydrolysis in catalysis. L-glutamine is bound by residues 382-385 (LGMQ), Glu405, and Arg462. Active-site residues include His507 and Glu509.

The protein belongs to the CTP synthase family. Homotetramer.

It catalyses the reaction UTP + L-glutamine + ATP + H2O = CTP + L-glutamate + ADP + phosphate + 2 H(+). The catalysed reaction is L-glutamine + H2O = L-glutamate + NH4(+). The enzyme catalyses UTP + NH4(+) + ATP = CTP + ADP + phosphate + 2 H(+). The protein operates within pyrimidine metabolism; CTP biosynthesis via de novo pathway; CTP from UDP: step 2/2. Allosterically activated by GTP, when glutamine is the substrate; GTP has no effect on the reaction when ammonia is the substrate. The allosteric effector GTP functions by stabilizing the protein conformation that binds the tetrahedral intermediate(s) formed during glutamine hydrolysis. Inhibited by the product CTP, via allosteric rather than competitive inhibition. Its function is as follows. Catalyzes the ATP-dependent amination of UTP to CTP with either L-glutamine or ammonia as the source of nitrogen. Regulates intracellular CTP levels through interactions with the four ribonucleotide triphosphates. In Prochlorococcus marinus (strain MIT 9312), this protein is CTP synthase.